The sequence spans 206 residues: MTANELITGDFTDASEPFSLFGTWLKEAEKNEVNDPNAVALATVDPDGMPNVRMVLLKGFDERGFVLYTNFESQKGREMLATRKAALCFHWKSLRRQVRLRGPVEIVSDEEADEYFMSRPRGSRIGAWASKQSRPLESRFALEKAVAEYTARHAIGEIPRPDYWSGFRIRPLSIEFWHDRPFRLHDRVEFRRETPDGGWTKVRMYP.

FMN contacts are provided by residues Arg-53 to Lys-58, Tyr-68 to Thr-69, Lys-75, and Gln-97. Residue Lys-58 participates in substrate binding. Tyr-115, Arg-119, and Ser-123 together coordinate substrate. FMN is bound by residues Gln-132–Ser-133 and Trp-177. Arg-183 to His-185 provides a ligand contact to substrate. Position 187 (Arg-187) interacts with FMN.

The protein belongs to the pyridoxamine 5'-phosphate oxidase family. Homodimer. FMN is required as a cofactor.

The catalysed reaction is pyridoxamine 5'-phosphate + O2 + H2O = pyridoxal 5'-phosphate + H2O2 + NH4(+). It catalyses the reaction pyridoxine 5'-phosphate + O2 = pyridoxal 5'-phosphate + H2O2. Its pathway is cofactor metabolism; pyridoxal 5'-phosphate salvage; pyridoxal 5'-phosphate from pyridoxamine 5'-phosphate: step 1/1. It functions in the pathway cofactor metabolism; pyridoxal 5'-phosphate salvage; pyridoxal 5'-phosphate from pyridoxine 5'-phosphate: step 1/1. Functionally, catalyzes the oxidation of either pyridoxine 5'-phosphate (PNP) or pyridoxamine 5'-phosphate (PMP) into pyridoxal 5'-phosphate (PLP). This is Pyridoxine/pyridoxamine 5'-phosphate oxidase from Rhizobium meliloti (strain 1021) (Ensifer meliloti).